A 280-amino-acid chain; its full sequence is 4-deoxy-L-threo-5-hexosulose-uronate ketol-isomerase 1 (280 aa).

Residues histidine 198, histidine 200, glutamate 205, and histidine 247 each contribute to the Zn(2+) site.

Belongs to the KduI family. The cofactor is Zn(2+).

The enzyme catalyses 5-dehydro-4-deoxy-D-glucuronate = 3-deoxy-D-glycero-2,5-hexodiulosonate. It participates in glycan metabolism; pectin degradation; 2-dehydro-3-deoxy-D-gluconate from pectin: step 4/5. Catalyzes the isomerization of 5-dehydro-4-deoxy-D-glucuronate to 3-deoxy-D-glycero-2,5-hexodiulosonate. In Bacteroides thetaiotaomicron (strain ATCC 29148 / DSM 2079 / JCM 5827 / CCUG 10774 / NCTC 10582 / VPI-5482 / E50), this protein is 4-deoxy-L-threo-5-hexosulose-uronate ketol-isomerase 1 (kduI1).